The chain runs to 505 residues: ATP synthase subunit alpha (505 aa).

170-177 (GDRQTGKT) is a binding site for ATP.

The protein belongs to the ATPase alpha/beta chains family. In terms of assembly, F-type ATPases have 2 components, CF(1) - the catalytic core - and CF(0) - the membrane proton channel. CF(1) has five subunits: alpha(3), beta(3), gamma(1), delta(1), epsilon(1). CF(0) has four main subunits: a(1), b(1), b'(1) and c(9-12).

It localises to the cellular thylakoid membrane. It catalyses the reaction ATP + H2O + 4 H(+)(in) = ADP + phosphate + 5 H(+)(out). In terms of biological role, produces ATP from ADP in the presence of a proton gradient across the membrane. The alpha chain is a regulatory subunit. The sequence is that of ATP synthase subunit alpha from Prochlorococcus marinus (strain SARG / CCMP1375 / SS120).